We begin with the raw amino-acid sequence, 34 residues long: Protein MgtT (34 aa).

A disordered region spans residues 1–34 (MNGDNPSPNRPLVTVVYKGPDFYDGEKKPPVNRR). Residues 24–34 (DGEKKPPVNRR) show a composition bias toward basic and acidic residues.

The sequence is that of Protein MgtT from Escherichia coli (strain K12).